A 114-amino-acid polypeptide reads, in one-letter code: Amphinase-1 (114 aa).

The active-site Proton acceptor is the histidine 15. 4 cysteine pairs are disulfide-bonded: cysteine 26-cysteine 79, cysteine 41-cysteine 85, cysteine 59-cysteine 100, and cysteine 97-cysteine 114. Asparagine 27 is a glycosylation site (N-linked (GlcNAc...) asparagine). Lysine 42–threonine 46 is a substrate binding site. N-linked (GlcNAc...) asparagine glycosylation is found at asparagine 67 and asparagine 91. Histidine 107 functions as the Proton donor in the catalytic mechanism.

This sequence belongs to the pancreatic ribonuclease family. As to quaternary structure, monomer. There are at least five different forms arising from glycan heterogeneity.

The protein resides in the secreted. Endonuclease, hydrolyzes highly polymerized RNA, poly(U) and poly(C), and the dinucleotides CpA and UpA. More active towards rCA than rUA or rUG. Has cytotoxic activity against cultured human submaxillary gland carcinoma cells. This Lithobates pipiens (Northern leopard frog) protein is Amphinase-1.